The sequence spans 519 residues: Bifunctional purine biosynthesis protein PurH (519 aa).

One can recognise an MGS-like domain in the interval 1–147 (MAKITRALIS…KNNHDVTVLV (147 aa)).

This sequence belongs to the PurH family.

It carries out the reaction (6R)-10-formyltetrahydrofolate + 5-amino-1-(5-phospho-beta-D-ribosyl)imidazole-4-carboxamide = 5-formamido-1-(5-phospho-D-ribosyl)imidazole-4-carboxamide + (6S)-5,6,7,8-tetrahydrofolate. The enzyme catalyses IMP + H2O = 5-formamido-1-(5-phospho-D-ribosyl)imidazole-4-carboxamide. Its pathway is purine metabolism; IMP biosynthesis via de novo pathway; 5-formamido-1-(5-phospho-D-ribosyl)imidazole-4-carboxamide from 5-amino-1-(5-phospho-D-ribosyl)imidazole-4-carboxamide (10-formyl THF route): step 1/1. It participates in purine metabolism; IMP biosynthesis via de novo pathway; IMP from 5-formamido-1-(5-phospho-D-ribosyl)imidazole-4-carboxamide: step 1/1. The sequence is that of Bifunctional purine biosynthesis protein PurH from Trichlorobacter lovleyi (strain ATCC BAA-1151 / DSM 17278 / SZ) (Geobacter lovleyi).